A 503-amino-acid polypeptide reads, in one-letter code: Anaerobic nitric oxide reductase flavorubredoxin (503 aa).

The interval 30-210 is zinc metallo-hydrolase; the sequence is LQGSSYNSYL…PFSRLVTAKI (181 aa). 6 residues coordinate Fe cation: H79, E81, D83, H147, D166, and H227. In terms of domain architecture, Flavodoxin-like spans 254–393; it reads ITLFYDTMSN…ICREHGREIA (140 aa). Residues 260–264 and 342–369 each bind FMN; these read TMSNN and AFGS…ETTL. A Rubredoxin-like domain is found at 451–502; sequence NGCMQCSVCQWIYDPALGEPMQDVTPGTMWSDVPDSFLCPECGLGKDVFNPI. Positions 456, 459, 489, and 492 each coordinate Fe cation.

It in the N-terminal section; belongs to the zinc metallo-hydrolase group 3 family. As to quaternary structure, homotetramer. Fe cation serves as cofactor. The cofactor is FMN.

The protein localises to the cytoplasm. It participates in nitrogen metabolism; nitric oxide reduction. Its function is as follows. Anaerobic nitric oxide reductase; uses NADH to detoxify nitric oxide (NO), protecting several 4Fe-4S NO-sensitive enzymes. Has at least 2 reductase partners, only one of which (NorW, flavorubredoxin reductase) has been identified. NO probably binds to the di-iron center; electrons enter from the NorW at rubredoxin and are transferred sequentially to the FMN center and the di-iron center. Also able to function as an aerobic oxygen reductase. This Pectobacterium carotovorum subsp. carotovorum (strain PC1) protein is Anaerobic nitric oxide reductase flavorubredoxin.